The primary structure comprises 481 residues: 6-phosphogluconate dehydrogenase, decarboxylating (481 aa).

Residues 11-16 (GLAVMG), 34-36 (NRT), 76-78 (VKA), and Asn-104 each bind NADP(+). Substrate is bound by residues Asn-104 and 130–132 (SGG). The Proton acceptor role is filled by Lys-184. Substrate is bound at residue 187–188 (HN). Glu-191 acts as the Proton donor in catalysis. Residues Tyr-192, Lys-259, Arg-286, Arg-445, and His-451 each contribute to the substrate site.

It belongs to the 6-phosphogluconate dehydrogenase family. Homodimer.

It carries out the reaction 6-phospho-D-gluconate + NADP(+) = D-ribulose 5-phosphate + CO2 + NADPH. The protein operates within carbohydrate degradation; pentose phosphate pathway; D-ribulose 5-phosphate from D-glucose 6-phosphate (oxidative stage): step 3/3. Catalyzes the oxidative decarboxylation of 6-phosphogluconate to ribulose 5-phosphate and CO(2), with concomitant reduction of NADP to NADPH. The protein is 6-phosphogluconate dehydrogenase, decarboxylating (Pgd) of Drosophila melanogaster (Fruit fly).